The primary structure comprises 382 residues: Lipid-A-disaccharide synthase (382 aa).

Belongs to the LpxB family.

It catalyses the reaction 2-N,3-O-bis[(3R)-3-hydroxytetradecanoyl]-alpha-D-glucosaminyl 1-phosphate + UDP-2-N,3-O-bis[(3R)-3-hydroxytetradecanoyl]-alpha-D-glucosamine = lipid A disaccharide (E. coli) + UDP + H(+). It carries out the reaction a lipid X + a UDP-2-N,3-O-bis[(3R)-3-hydroxyacyl]-alpha-D-glucosamine = a lipid A disaccharide + UDP + H(+). Its pathway is glycolipid biosynthesis; lipid IV(A) biosynthesis; lipid IV(A) from (3R)-3-hydroxytetradecanoyl-[acyl-carrier-protein] and UDP-N-acetyl-alpha-D-glucosamine: step 5/6. Its function is as follows. Condensation of UDP-2,3-diacylglucosamine and 2,3-diacylglucosamine-1-phosphate to form lipid A disaccharide, a precursor of lipid A, a phosphorylated glycolipid that anchors the lipopolysaccharide to the outer membrane of the cell. This is Lipid-A-disaccharide synthase from Salmonella typhimurium (strain LT2 / SGSC1412 / ATCC 700720).